The following is a 524-amino-acid chain: Phytoene desaturase (neurosporene-forming) (524 aa).

12–45 (VVIGAGLGGLAAAMRLGAKGYKVTVVDRLDRPGG) provides a ligand contact to FAD. Residues 500 to 524 (PDAPKPETPAAAAPKARTPRAKAAQ) form a disordered region. Low complexity predominate over residues 507–524 (TPAAAAPKARTPRAKAAQ).

This sequence belongs to the carotenoid/retinoid oxidoreductase family. The cofactor is FAD.

The catalysed reaction is 15-cis-phytoene + 3 A = all-trans-neurosporene + 3 AH2. It functions in the pathway carotenoid biosynthesis. Its activity is regulated as follows. Is inhibited by diphenylamine (DPA). Is also slightly inhibited by NAD, NADP or ATP in the presence of FAD. Functionally, converts phytoene into all-trans-neurosporene as the major product, via the intermediary of phytofluene and zeta-carotene, by the introduction of three double bonds. Both intermediates, phytofluene and zeta-carotene, can be used as substrates and converted to neurosporene. 1,2-epoxy phytoene is also a suitable substrate whereas the C30 diapophytoene is not. In Rhodobacter capsulatus (strain ATCC BAA-309 / NBRC 16581 / SB1003), this protein is Phytoene desaturase (neurosporene-forming) (crtI).